A 32-amino-acid polypeptide reads, in one-letter code: Protein YthB (32 aa).

This chain is Protein YthB, found in Escherichia coli (strain K12).